We begin with the raw amino-acid sequence, 520 residues long: Mu-like prophage FluMu protein gp29 (520 aa).

The protein to phage Mu protein gp29.

The polypeptide is Mu-like prophage FluMu protein gp29 (Haemophilus influenzae (strain ATCC 51907 / DSM 11121 / KW20 / Rd)).